The following is a 259-amino-acid chain: 3-deoxy-manno-octulosonate cytidylyltransferase (259 aa).

Belongs to the KdsB family.

It localises to the cytoplasm. The enzyme catalyses 3-deoxy-alpha-D-manno-oct-2-ulosonate + CTP = CMP-3-deoxy-beta-D-manno-octulosonate + diphosphate. It functions in the pathway nucleotide-sugar biosynthesis; CMP-3-deoxy-D-manno-octulosonate biosynthesis; CMP-3-deoxy-D-manno-octulosonate from 3-deoxy-D-manno-octulosonate and CTP: step 1/1. Its pathway is bacterial outer membrane biogenesis; lipopolysaccharide biosynthesis. Activates KDO (a required 8-carbon sugar) for incorporation into bacterial lipopolysaccharide in Gram-negative bacteria. The chain is 3-deoxy-manno-octulosonate cytidylyltransferase from Xanthomonas axonopodis pv. citri (strain 306).